The primary structure comprises 132 residues: Small ribosomal subunit protein uS8 (132 aa).

The protein belongs to the universal ribosomal protein uS8 family. Part of the 30S ribosomal subunit. Contacts proteins S5 and S12.

Functionally, one of the primary rRNA binding proteins, it binds directly to 16S rRNA central domain where it helps coordinate assembly of the platform of the 30S subunit. The sequence is that of Small ribosomal subunit protein uS8 from Caulobacter vibrioides (strain ATCC 19089 / CIP 103742 / CB 15) (Caulobacter crescentus).